A 375-amino-acid polypeptide reads, in one-letter code: Lipid-A-disaccharide synthase (375 aa).

It belongs to the LpxB family.

The catalysed reaction is a lipid X + a UDP-2-N,3-O-bis[(3R)-3-hydroxyacyl]-alpha-D-glucosamine = a lipid A disaccharide + UDP + H(+). It participates in bacterial outer membrane biogenesis; LPS lipid A biosynthesis. Its function is as follows. Condensation of UDP-2,3-diacylglucosamine and 2,3-diacylglucosamine-1-phosphate to form lipid A disaccharide, a precursor of lipid A, a phosphorylated glycolipid that anchors the lipopolysaccharide to the outer membrane of the cell. This Pseudomonas putida (strain ATCC 47054 / DSM 6125 / CFBP 8728 / NCIMB 11950 / KT2440) protein is Lipid-A-disaccharide synthase.